The primary structure comprises 278 residues: UPF0758 protein BURPS1106A_0984 (278 aa).

The segment at 1–64 (MQYEIVSAGE…ATAAARRGRD (64 aa)) is disordered. Low complexity predominate over residues 22-59 (AAAPAAPSSAVPSSAALSSAALSSAAQPTGAPPATAAA). One can recognise an MPN domain in the interval 156-278 (LVDSPGAVDD…TFSFAQAGWI (123 aa)). Residues His227, His229, and Asp240 each contribute to the Zn(2+) site. The JAMM motif signature appears at 227 to 240 (HNHPSGAVRPSAAD).

Belongs to the UPF0758 family.

The protein is UPF0758 protein BURPS1106A_0984 of Burkholderia pseudomallei (strain 1106a).